The following is a 248-amino-acid chain: Mannose-binding protein C (248 aa).

Residues 1–20 form the signal peptide; that stretch reads MSLFPSLPLLLLSVVAASYS. Residues 42–99 form the Collagen-like domain; that stretch reads GINGFPGKDGRDGTKGEKGEPGQGLRGLQGPPGKLGPPGNPGPSGSPGPKGQKGDPGK. Positions 43–111 are disordered; that stretch reads INGFPGKDGR…DCDSSLAASE (69 aa). A 4-hydroxyproline modification is found at P47. The span at 49-61 shows a compositional bias: basic and acidic residues; sequence KDGRDGTKGEKGE. A 4-hydroxyproline mark is found at P73, P79, P82, and P88. The span at 75-87 shows a compositional bias: pro residues; the sequence is KLGPPGNPGPSGS. Residues 93–102 show a composition bias toward basic and acidic residues; sequence QKGDPGKSPD. A coiled-coil region spans residues 112 to 130; it reads RKALQTEMARIKKWLTFSL. Residues 134–245 form the C-type lectin domain; the sequence is VGNKFFLTNG…CSSSHLAVCE (112 aa). Intrachain disulfides connect C155–C244 and C222–C236.

As to quaternary structure, oligomeric complex of 3 or more homotrimers. Interacts with MASP1 and MASP2. Interacts with MEP1A and MEP1B and may inhibit their catalytic activity. In terms of processing, hydroxylation on proline residues within the sequence motif, GXPG, is most likely to be 4-hydroxy as this fits the requirement for 4-hydroxylation in vertebrates.

It localises to the secreted. Calcium-dependent lectin involved in innate immune defense. Binds mannose, fucose and N-acetylglucosamine on different microorganisms and activates the lectin complement pathway. Binds to late apoptotic cells, as well as to apoptotic blebs and to necrotic cells, but not to early apoptotic cells, facilitating their uptake by macrophages. The polypeptide is Mannose-binding protein C (MBL2) (Pongo pygmaeus (Bornean orangutan)).